A 1285-amino-acid chain; its full sequence is DNA polymerase II large subunit (1285 aa).

Residues 565–586 (TRIGGRMGRPGKSKPREMRPPP) are disordered.

It belongs to the archaeal DNA polymerase II family. In terms of assembly, heterodimer of a large subunit and a small subunit. In terms of processing, this protein undergoes a protein self splicing that involves a post-translational excision of the intervening region (intein) followed by peptide ligation.

It catalyses the reaction DNA(n) + a 2'-deoxyribonucleoside 5'-triphosphate = DNA(n+1) + diphosphate. It carries out the reaction Exonucleolytic cleavage in the 3'- to 5'-direction to yield nucleoside 5'-phosphates.. Functionally, possesses two activities: a DNA synthesis (polymerase) and an exonucleolytic activity that degrades single-stranded DNA in the 3'- to 5'-direction. Has a template-primer preference which is characteristic of a replicative DNA polymerase. The protein is DNA polymerase II large subunit of Methanoculleus marisnigri (strain ATCC 35101 / DSM 1498 / JR1).